A 607-amino-acid chain; its full sequence is Glutamine--fructose-6-phosphate aminotransferase [isomerizing] (607 aa).

Cysteine 2 (nucleophile; for GATase activity) is an active-site residue. The 216-residue stretch at 2 to 217 (CGIIGIIGRE…EGDWVVLTRE (216 aa)) folds into the Glutamine amidotransferase type-2 domain. 2 consecutive SIS domains span residues 283 to 422 (PDFD…VKGQ) and 455 to 597 (VATA…VDQP). Catalysis depends on lysine 602, which acts as the For Fru-6P isomerization activity.

Homodimer.

The protein localises to the cytoplasm. It carries out the reaction D-fructose 6-phosphate + L-glutamine = D-glucosamine 6-phosphate + L-glutamate. Its function is as follows. Catalyzes the first step in hexosamine metabolism, converting fructose-6P into glucosamine-6P using glutamine as a nitrogen source. The sequence is that of Glutamine--fructose-6-phosphate aminotransferase [isomerizing] from Zymomonas mobilis subsp. mobilis (strain ATCC 31821 / ZM4 / CP4).